The sequence spans 212 residues: Deoxyribose-phosphate aldolase (212 aa).

The active-site Proton donor/acceptor is the Asp-89. Lys-151 acts as the Schiff-base intermediate with acetaldehyde in catalysis. The active-site Proton donor/acceptor is Lys-180.

It belongs to the DeoC/FbaB aldolase family. DeoC type 1 subfamily.

Its subcellular location is the cytoplasm. The enzyme catalyses 2-deoxy-D-ribose 5-phosphate = D-glyceraldehyde 3-phosphate + acetaldehyde. It functions in the pathway carbohydrate degradation; 2-deoxy-D-ribose 1-phosphate degradation; D-glyceraldehyde 3-phosphate and acetaldehyde from 2-deoxy-alpha-D-ribose 1-phosphate: step 2/2. Functionally, catalyzes a reversible aldol reaction between acetaldehyde and D-glyceraldehyde 3-phosphate to generate 2-deoxy-D-ribose 5-phosphate. The sequence is that of Deoxyribose-phosphate aldolase from Clostridium botulinum (strain Langeland / NCTC 10281 / Type F).